Reading from the N-terminus, the 61-residue chain is Large ribosomal subunit protein bL32 (61 aa).

The protein belongs to the bacterial ribosomal protein bL32 family.

This is Large ribosomal subunit protein bL32 from Ehrlichia canis (strain Jake).